Here is a 343-residue protein sequence, read N- to C-terminus: MGEYIMEKNTIILGIETSCDETAVAVVKNGTEIIANVVASQIESHKRFGGVVPEIASRHHVEEITVVLEEALKEANITFDDIDAIAVTEGPGLVGALLIGVNAAKAVAFAHDIPLVGVHHIAGHIYANRLVKEVQFPLLSLVVSGGHTELVYMKEHGSFEVIGETRDDAAGEAYDKVARTLSMPYPGGPHIDRLAHEGEPTIDLPRAWLEPDSYDFSFSGLKSAVINTVHNAKQRGIEIAPEDLAASFQESVIDVLVTKASRAADAYNVKQVLLAGGVAANKGLRARLEAEFAQKENVELIIPPLSLCTDNAAMIAAAGTIAYEQGKRATLALNANPGLDIEA.

2 residues coordinate Fe cation: His-120 and His-124. Residues 142 to 146 (VVSGG), Asp-175, Gly-188, Asp-192, and Asn-281 each bind substrate. Asp-310 is a Fe cation binding site.

Belongs to the KAE1 / TsaD family. It depends on Fe(2+) as a cofactor.

The protein localises to the cytoplasm. It carries out the reaction L-threonylcarbamoyladenylate + adenosine(37) in tRNA = N(6)-L-threonylcarbamoyladenosine(37) in tRNA + AMP + H(+). Its function is as follows. Required for the formation of a threonylcarbamoyl group on adenosine at position 37 (t(6)A37) in tRNAs that read codons beginning with adenine. Is involved in the transfer of the threonylcarbamoyl moiety of threonylcarbamoyl-AMP (TC-AMP) to the N6 group of A37, together with TsaE and TsaB. TsaD likely plays a direct catalytic role in this reaction. The chain is tRNA N6-adenosine threonylcarbamoyltransferase from Bacillus cereus (strain ATCC 10987 / NRS 248).